A 387-amino-acid polypeptide reads, in one-letter code: 3-ketoacyl-CoA thiolase (387 aa).

Residue C91 is the Acyl-thioester intermediate of the active site. Residues H343 and C373 each act as proton acceptor in the active site.

This sequence belongs to the thiolase-like superfamily. Thiolase family. As to quaternary structure, heterotetramer of two alpha chains (FadB) and two beta chains (FadA).

It is found in the cytoplasm. The enzyme catalyses an acyl-CoA + acetyl-CoA = a 3-oxoacyl-CoA + CoA. Its pathway is lipid metabolism; fatty acid beta-oxidation. Functionally, catalyzes the final step of fatty acid oxidation in which acetyl-CoA is released and the CoA ester of a fatty acid two carbons shorter is formed. The protein is 3-ketoacyl-CoA thiolase of Shewanella sp. (strain MR-4).